Consider the following 664-residue polypeptide: ATP-dependent zinc metalloprotease FtsH (664 aa).

Over Met1–Trp9 the chain is Cytoplasmic. Residues Ile10–Leu30 traverse the membrane as a helical segment. At Phe31–Pro136 the chain is on the extracellular side. The chain crosses the membrane as a helical span at residues Phe137–Ile157. Over Tyr158–Glu664 the chain is Cytoplasmic. Gly229–Thr236 serves as a coordination point for ATP. His451 serves as a coordination point for Zn(2+). The active site involves Glu452. Positions 455 and 529 each coordinate Zn(2+). Residues Ile639–Glu649 show a composition bias toward basic and acidic residues. Residues Ile639–Glu664 form a disordered region.

In the central section; belongs to the AAA ATPase family. The protein in the C-terminal section; belongs to the peptidase M41 family. Homohexamer. Requires Zn(2+) as cofactor.

Its subcellular location is the cell membrane. In terms of biological role, acts as a processive, ATP-dependent zinc metallopeptidase for both cytoplasmic and membrane proteins. Plays a role in the quality control of integral membrane proteins. The sequence is that of ATP-dependent zinc metalloprotease FtsH from Mycoplasmopsis synoviae (strain 53) (Mycoplasma synoviae).